The sequence spans 1026 residues: MESALSARDRVGVQDFLLLENHNSEAAFIENLRRRYREGLIYTYIGSVLVSVNPYKELEIYSKQNMERHRGVNFYEISPHIFALADNSYRALRTERRDQCILISGESGAGKTEASKKILQYYTHICPTRNNTHTIRERLLQSNPVLEAFGNAKTLRNDNSSRFGKYMDIQFDYKGAPIGGHILNYLLEKSRVAHQNHGERNFHIFYQLLEGGEDLLLKRLGLDKTNPQHYHYLIKGNCPRVSSISDKNGWKVVRNALTIIGFEDEEIQALMEIVASVLHLGNTQFGEDEEGETHITTEAQLQFLSQLLGVDGSVLKAALTHKKIVAKGEEMISPLSLEQALSARDSFAKAIYGRAFTWLVQKLNRSLAFKDEIYYSSKCSSVIGLLDIYGFEVFQHNSFEQFCINYCNEKLQQLFIELTLKSEQEEYEAEGWERVEYFNNKIICDLVEEKHKGIIAILDEECLRRGDASDITFLEKLEDTLGGHAHFITHKMANGKIRKAIGREEFRLVHYAGEVNYNVNGFLDKNNDLLYRHLKEVLCQSTNHIVSQCFHADELMDQRRPETAATQFKLSLAKLMDILMSKEPSYVRCIKPNDGKQPGRFDEVLVRHQVKYLGLMENLRVRRAGFAYRRSYEAFLERYKSLCPDTWPNWHGNLPEGVATLVKHLNYKPEEFKLGRSKIFIRFPRTLFITEDALEAQKQTIAVTLQKSWRGYRERANYHRIRHAVIVIQSWWRGVKGRRKAKHRRQAADTIRNFIKGFILRNEPRCPDNEYFLDHVRFSFLMKVKRNLPKSVLDKSWPKPPPSLTEASEHIHRICIRNLVNDYCRRIQPEWRKQLEQKVVASGIFKGQKDGYSRSVPKLFVATRLEAEEINLKVLQTLGSDNKVKYGIAVTKYDRHGFRPRVRQLLLTTSSAVLVQEAKIKQRIDYGALLGISVSSLSDGFFVLHIPTADSKQKGDLVLQCDHVIEAVTKLAIMADKIHNVNISQDSIRFAIARGKEGVIDFTSGSDLRVVKSKNGHLSVTTPRIS.

Met1 is subject to N-acetylmethionine. The 684-residue stretch at 12–695 (GVQDFLLLEN…TLFITEDALE (684 aa)) folds into the Myosin motor domain. ATP contacts are provided by residues Asn53, Tyr61, 104-113 (SGESGAGKTE), and 157-161 (NDNSS). Position 349 is an N6-methyllysine (Lys349). The interval 572 to 594 (LAKLMDILMSKEPSYVRCIKPND) is actin-binding. IQ domains follow at residues 698–727 (KQTIAVTLQKSWRGYRERANYHRIRHAVIV) and 721–750 (IRHAVIVIQSWWRGVKGRRKAKHRRQAADT). One can recognise a TH1 domain in the interval 849-1024 (KDGYSRSVPK…NGHLSVTTPR (176 aa)).

This sequence belongs to the TRAFAC class myosin-kinesin ATPase superfamily. Myosin family. In terms of assembly, interacts (via its IQ motifs) with calm.

It is found in the cytoplasm. The protein resides in the cell cortex. The protein localises to the cell projection. Its subcellular location is the ruffle membrane. It localises to the cytoplasmic vesicle. It is found in the stereocilium membrane. Functionally, myosins are actin-based motor molecules with ATPase activity. Unconventional myosins serve in intracellular movements. Their highly divergent tails are presumed to bind to membranous compartments, which would be moved relative to actin filaments. The protein is Unconventional myosin-Ic (myo1c) of Danio rerio (Zebrafish).